A 918-amino-acid polypeptide reads, in one-letter code: Leucine--tRNA ligase (918 aa).

The 'HIGH' region motif lies at 40–51 (PYPSGVGLHVGH). A 'KMSKS' region motif is present at residues 692–696 (KMSKS). Residue K695 coordinates ATP.

Belongs to the class-I aminoacyl-tRNA synthetase family.

It localises to the cytoplasm. It carries out the reaction tRNA(Leu) + L-leucine + ATP = L-leucyl-tRNA(Leu) + AMP + diphosphate. The sequence is that of Leucine--tRNA ligase from Azobacteroides pseudotrichonymphae genomovar. CFP2.